A 211-amino-acid chain; its full sequence is Small ribosomal subunit protein bS6c alpha (211 aa).

Over residues 1-19 (MATFSLTSTLPSSSPTTSL) the composition is skewed to low complexity. Disordered stretches follow at residues 1-25 (MATFSLTSTLPSSSPTTSLHSIPKP) and 80-100 (DEDPPSTPPAGLAVEEKPEPQ). Residues 1 to 65 (MATFSLTSTL…YGPYVKAIAL (65 aa)) constitute a chloroplast transit peptide.

The protein belongs to the bacterial ribosomal protein bS6 family. Component of the chloroplast small ribosomal subunit (SSU). Mature 70S chloroplast ribosomes of higher plants consist of a small (30S) and a large (50S) subunit. The 30S small subunit contains 1 molecule of ribosomal RNA (16S rRNA) and 24 different proteins. The 50S large subunit contains 3 rRNA molecules (23S, 5S and 4.5S rRNA) and 33 different proteins.

It is found in the plastid. Its subcellular location is the chloroplast. In terms of biological role, component of the chloroplast ribosome (chloro-ribosome), a dedicated translation machinery responsible for the synthesis of chloroplast genome-encoded proteins, including proteins of the transcription and translation machinery and components of the photosynthetic apparatus. The protein is Small ribosomal subunit protein bS6c alpha (RPS6) of Spinacia oleracea (Spinach).